Here is a 269-residue protein sequence, read N- to C-terminus: Phosphatidylglycerol--prolipoprotein diacylglyceryl transferase (269 aa).

4 helical membrane-spanning segments follow: residues 14 to 34, 49 to 69, 89 to 109, and 118 to 138; these read IVQI…AGII, VAPE…IPMA, VFAI…GLLA, and GYSL…GQAI. R140 lines the a 1,2-diacyl-sn-glycero-3-phospho-(1'-sn-glycerol) pocket. The next 3 membrane-spanning stretches (helical) occupy residues 180 to 200, 208 to 228, and 240 to 260; these read TFLY…FVFF, GSIA…IEGL, and TAQL…WWLN.

The protein belongs to the Lgt family.

The protein resides in the cell inner membrane. It carries out the reaction L-cysteinyl-[prolipoprotein] + a 1,2-diacyl-sn-glycero-3-phospho-(1'-sn-glycerol) = an S-1,2-diacyl-sn-glyceryl-L-cysteinyl-[prolipoprotein] + sn-glycerol 1-phosphate + H(+). It participates in protein modification; lipoprotein biosynthesis (diacylglyceryl transfer). Catalyzes the transfer of the diacylglyceryl group from phosphatidylglycerol to the sulfhydryl group of the N-terminal cysteine of a prolipoprotein, the first step in the formation of mature lipoproteins. This is Phosphatidylglycerol--prolipoprotein diacylglyceryl transferase from Gloeobacter violaceus (strain ATCC 29082 / PCC 7421).